We begin with the raw amino-acid sequence, 177 residues long: ATP synthase subunit b, chloroplastic (177 aa).

Residues 22–42 form a helical membrane-spanning segment; that stretch reads ILETNIINLAAVVGIVVFFVG.

It belongs to the ATPase B chain family. As to quaternary structure, F-type ATPases have 2 components, F(1) - the catalytic core - and F(0) - the membrane proton channel. F(1) has five subunits: alpha(3), beta(3), gamma(1), delta(1), epsilon(1). F(0) has four main subunits: a(1), b(1), b'(1) and c(10-14). The alpha and beta chains form an alternating ring which encloses part of the gamma chain. F(1) is attached to F(0) by a central stalk formed by the gamma and epsilon chains, while a peripheral stalk is formed by the delta, b and b' chains.

Its subcellular location is the plastid. The protein localises to the chloroplast thylakoid membrane. In terms of biological role, f(1)F(0) ATP synthase produces ATP from ADP in the presence of a proton or sodium gradient. F-type ATPases consist of two structural domains, F(1) containing the extramembraneous catalytic core and F(0) containing the membrane proton channel, linked together by a central stalk and a peripheral stalk. During catalysis, ATP synthesis in the catalytic domain of F(1) is coupled via a rotary mechanism of the central stalk subunits to proton translocation. Component of the F(0) channel, it forms part of the peripheral stalk, linking F(1) to F(0). The protein is ATP synthase subunit b, chloroplastic of Oedogonium cardiacum (Filamentous green alga).